A 292-amino-acid chain; its full sequence is Arabinose operon regulatory protein (292 aa).

Proline 8, threonine 24, arginine 38, tyrosine 82, and histidine 93 together coordinate alpha-L-arabinopyanose. The HTH araC/xylS-type domain maps to 180 to 279 (REACQYISDH…GASPSEFRAG (100 aa)). DNA-binding regions (H-T-H motif) lie at residues 198–219 (ASVA…RQQL) and 246–269 (IATV…KKCT).

As to quaternary structure, homodimer.

It is found in the cytoplasm. With respect to regulation, arabinose converts the repressor form of AraC to the activator form to regulate the araBAD promoter. In the absence of arabinose, AraC binds to the araO2 and araI1 half-sites in the promoter region of the araBAD operon, leading to the formation of a DNA loop that blocks access of RNA polymerase to the promoter. In the presence of arabinose and the cyclic AMP receptor protein (CRP), it binds to the adjacent half-sites araI1 and araI2, leading to the binding of RNA polymerase to the promoter region and transcription of the araBAD operon. AraI1 acts as a switch mechanism allowing both the repressor and the activator forms of AraC protein to regulate the araBAD promoter. Inhibited by D-fucose, which binds competitively to the same site on the protein. Transcription factor that regulates the expression of several genes involved in the transport and metabolism of L-arabinose. Functions both as a positive and a negative regulator. In the presence of arabinose, activates the expression of the araBAD, araE, araFGH and araJ promoters. In the absence of arabinose, negatively regulates the araBAD operon. Represses its own transcription. Acts by binding directly to DNA. The protein is Arabinose operon regulatory protein of Escherichia coli (strain K12).